The sequence spans 304 residues: Prephenate dehydratase (304 aa).

The Prephenate dehydratase domain occupies 3 to 178 (RIAYFGPVGT…ARTRFLLMRR (176 aa)). Positions 193-271 (SIVAAAANRT…DVRFLGSFAR (79 aa)) constitute an ACT domain.

It carries out the reaction prephenate + H(+) = 3-phenylpyruvate + CO2 + H2O. The protein operates within amino-acid biosynthesis; L-phenylalanine biosynthesis; phenylpyruvate from prephenate: step 1/1. This Amycolatopsis methanolica protein is Prephenate dehydratase (pheA).